The primary structure comprises 725 residues: Dolichyl-phosphate-mannose--protein mannosyltransferase 5 (725 aa).

6 consecutive transmembrane segments (helical) span residues 34 to 54 (QFAV…LYIP), 117 to 137 (YLWL…LTFF), 145 to 165 (SVIS…VTVS), 192 to 212 (IPFT…LGLN), 219 to 239 (GLFT…EILG), and 256 to 276 (VVAF…IHFE). MIR domains lie at 303–356 (PLQV…IETK), 368–427 (QREV…IRML), and 439–495 (LIKL…VESS). An N-linked (GlcNAc...) asparagine glycan is attached at N409. Transmembrane regions (helical) follow at residues 570–590 (IYYL…LIAI), 619–639 (FYNN…PYCL), 644–664 (LYLH…SQYL), and 673–693 (IIGG…FYEF).

It belongs to the glycosyltransferase 39 family.

Its subcellular location is the endoplasmic reticulum membrane. The catalysed reaction is a di-trans,poly-cis-dolichyl beta-D-mannosyl phosphate + L-seryl-[protein] = 3-O-(alpha-D-mannosyl)-L-seryl-[protein] + a di-trans,poly-cis-dolichyl phosphate + H(+). The enzyme catalyses a di-trans,poly-cis-dolichyl beta-D-mannosyl phosphate + L-threonyl-[protein] = 3-O-(alpha-D-mannosyl)-L-threonyl-[protein] + a di-trans,poly-cis-dolichyl phosphate + H(+). Its pathway is protein modification; protein glycosylation. In terms of biological role, protein mannosyltransferase (PMT) involved in hyphal morphogenesis and drug sensitivity. Transfers mannose from Dol-P-mannose to Ser or Thr residues on proteins. PMT1, PMT2 and PMT4 account for most of the protein-O-glycosylation activity, while PMT5 and PMT6 may specifically modulate a much narrower spectrum of target proteins. Required for biofilm formation. This Candida albicans (strain SC5314 / ATCC MYA-2876) (Yeast) protein is Dolichyl-phosphate-mannose--protein mannosyltransferase 5.